We begin with the raw amino-acid sequence, 209 residues long: Uracil phosphoribosyltransferase (209 aa).

5-phospho-alpha-D-ribose 1-diphosphate contacts are provided by residues Arg-79, Arg-104, and 131–139; that span reads DPMLATGGS. Residues Ile-194 and 199–201 each bind uracil; that span reads GDA. Asp-200 contributes to the 5-phospho-alpha-D-ribose 1-diphosphate binding site.

The protein belongs to the UPRTase family. Mg(2+) is required as a cofactor.

It catalyses the reaction UMP + diphosphate = 5-phospho-alpha-D-ribose 1-diphosphate + uracil. Its pathway is pyrimidine metabolism; UMP biosynthesis via salvage pathway; UMP from uracil: step 1/1. With respect to regulation, allosterically activated by GTP. Its function is as follows. Catalyzes the conversion of uracil and 5-phospho-alpha-D-ribose 1-diphosphate (PRPP) to UMP and diphosphate. In Clostridium tetani (strain Massachusetts / E88), this protein is Uracil phosphoribosyltransferase.